The primary structure comprises 363 residues: Peptide chain release factor 1 (363 aa).

An N5-methylglutamine modification is found at Q237. Residues 284–296 show a composition bias toward basic and acidic residues; it reads EDEKRRSAEESTR. A disordered region spans residues 284-306; that stretch reads EDEKRRSAEESTRRSLVASGDRS.

The protein belongs to the prokaryotic/mitochondrial release factor family. In terms of processing, methylated by PrmC. Methylation increases the termination efficiency of RF1.

The protein localises to the cytoplasm. Functionally, peptide chain release factor 1 directs the termination of translation in response to the peptide chain termination codons UAG and UAA. The polypeptide is Peptide chain release factor 1 (Shewanella putrefaciens (strain CN-32 / ATCC BAA-453)).